A 452-amino-acid chain; its full sequence is NAD kinase 2, mitochondrial (452 aa).

The transit peptide at 1 to 50 directs the protein to the mitochondrion; sequence MTCYRGFLLGSCRRVAGGRAALRGSGSGADGRRHLGHGQPRELAGGGSPA. Positions 23–52 are disordered; that stretch reads RGSGSGADGRRHLGHGQPRELAGGGSPADG. N6-acetyllysine; alternate is present on lysine 64. At lysine 64 the chain carries N6-succinyllysine; alternate. Serine 176 bears the Phosphoserine mark. Lysine 312 carries the post-translational modification N6-succinyllysine. Lysine 327 is modified (N6-acetyllysine; alternate). An N6-succinyllysine; alternate modification is found at lysine 327. Phosphoserine is present on serine 377. Lysine 407 carries the N6-acetyllysine modification.

This sequence belongs to the NAD kinase family. Homodimer.

Its subcellular location is the mitochondrion. It carries out the reaction NAD(+) + ATP = ADP + NADP(+) + H(+). Its activity is regulated as follows. Inhibited by NADH, NADPH and NADP(+). In terms of biological role, mitochondrial NAD(+) kinase that phosphorylates NAD(+) to yield NADP(+). Can use both ATP or inorganic polyphosphate as the phosphoryl donor. The sequence is that of NAD kinase 2, mitochondrial (Nadk2) from Mus musculus (Mouse).